A 131-amino-acid polypeptide reads, in one-letter code: Keratin, high-sulfur matrix protein, IIIA3 (131 aa).

Wool.

The keratin products of mammalian epidermal derivatives such as wool and hair consist of microfibrils embedded in a rigid matrix of other proteins. The matrix proteins include the high-sulfur and high-tyrosine keratins, having molecular weights of 6-20 kDa, whereas the microfibrils contain the larger, low-sulfur keratins (40-56 kDa). The polypeptide is Keratin, high-sulfur matrix protein, IIIA3 (Ovis aries (Sheep)).